The primary structure comprises 297 residues: Ribosomal RNA small subunit methyltransferase A (297 aa).

6 residues coordinate S-adenosyl-L-methionine: N31, L33, G58, E79, D104, and N129.

Belongs to the class I-like SAM-binding methyltransferase superfamily. rRNA adenine N(6)-methyltransferase family. RsmA subfamily.

Its subcellular location is the cytoplasm. It catalyses the reaction adenosine(1518)/adenosine(1519) in 16S rRNA + 4 S-adenosyl-L-methionine = N(6)-dimethyladenosine(1518)/N(6)-dimethyladenosine(1519) in 16S rRNA + 4 S-adenosyl-L-homocysteine + 4 H(+). In terms of biological role, specifically dimethylates two adjacent adenosines (A1518 and A1519) in the loop of a conserved hairpin near the 3'-end of 16S rRNA in the 30S particle. May play a critical role in biogenesis of 30S subunits. This Staphylococcus aureus (strain Newman) protein is Ribosomal RNA small subunit methyltransferase A.